Reading from the N-terminus, the 174-residue chain is MTDISKVIASLMREVPDFPEPGIQFKDLTPLLADAEGLMAVTDALAATAEGADLVAGIDARGFLLGAAVALRLGTGVLAVRKGGKLPPPVHSQTYNLEYGSATLEIPADGLDIAGRSVVIIDDVLATGGTVAATHRLLTSGGATVLHAAVVLELTALGGREVVQPLSVSSLYTV.

It belongs to the purine/pyrimidine phosphoribosyltransferase family. In terms of assembly, homodimer.

It localises to the cytoplasm. The catalysed reaction is AMP + diphosphate = 5-phospho-alpha-D-ribose 1-diphosphate + adenine. Its pathway is purine metabolism; AMP biosynthesis via salvage pathway; AMP from adenine: step 1/1. Functionally, catalyzes a salvage reaction resulting in the formation of AMP, that is energically less costly than de novo synthesis. This Mycobacterium sp. (strain JLS) protein is Adenine phosphoribosyltransferase.